We begin with the raw amino-acid sequence, 240 residues long: UDP-2,3-diacylglucosamine hydrolase (240 aa).

5 residues coordinate Mn(2+): D8, H10, D41, N79, and H114. Position 79–80 (79–80 (NR)) interacts with substrate. Residues D122, S160, N164, K167, and H195 each contribute to the substrate site. The Mn(2+) site is built by H195 and H197.

Belongs to the LpxH family. Mn(2+) serves as cofactor.

Its subcellular location is the cell inner membrane. The enzyme catalyses UDP-2-N,3-O-bis[(3R)-3-hydroxytetradecanoyl]-alpha-D-glucosamine + H2O = 2-N,3-O-bis[(3R)-3-hydroxytetradecanoyl]-alpha-D-glucosaminyl 1-phosphate + UMP + 2 H(+). Its pathway is glycolipid biosynthesis; lipid IV(A) biosynthesis; lipid IV(A) from (3R)-3-hydroxytetradecanoyl-[acyl-carrier-protein] and UDP-N-acetyl-alpha-D-glucosamine: step 4/6. Its function is as follows. Hydrolyzes the pyrophosphate bond of UDP-2,3-diacylglucosamine to yield 2,3-diacylglucosamine 1-phosphate (lipid X) and UMP by catalyzing the attack of water at the alpha-P atom. Involved in the biosynthesis of lipid A, a phosphorylated glycolipid that anchors the lipopolysaccharide to the outer membrane of the cell. The protein is UDP-2,3-diacylglucosamine hydrolase of Serratia proteamaculans (strain 568).